A 114-amino-acid chain; its full sequence is Circadian clock oscillator protein KaiB (114 aa).

Belongs to the KaiB family. As to quaternary structure, may undergo a major conformational rearrangment; in the free state forms homooligomers. When bound to KaiC switches to a monomeric thioredoxin-fold (KaiB(fs)). The active oscillator complex is probably KaiC(6):KaiB(6).

Component of the KaiBC clock protein complex, which constitutes the main circadian regulator in cyanobacteria; it may modify the ATPase activity of KaiC. Its function is as follows. May be a metamorphic protein which reversibly switches between an inactive tetrameric fold and a rare, thioredoxin-like monomeric fold (KaiB(fs)). KaiB(fs) binds phospho-KaiC, and perhaps clock output effectors. This is Circadian clock oscillator protein KaiB from Prochlorococcus marinus (strain MIT 9211).